A 790-amino-acid chain; its full sequence is AMP deaminase (790 aa).

Over residues 1-14 the composition is skewed to polar residues; that stretch reads MSTPLRGSSPQVSF. The tract at residues 1-26 is disordered; sequence MSTPLRGSSPQVSFYESELDQEGGSD. Histidine 221 and histidine 223 together coordinate Zn(2+). Residues histidine 223 and 292–297 contribute to the substrate site; that span reads KFNLKY. Histidine 488 provides a ligand contact to Zn(2+). A substrate-binding site is contributed by glutamate 491. Histidine 510 acts as the Proton acceptor in catalysis. A Zn(2+)-binding site is contributed by aspartate 565. 566–569 provides a ligand contact to substrate; that stretch reads DPLQ. Disordered stretches follow at residues 698–726 and 739–790; these read NKLRNSSVGSTPNNGTPSSSGTPSLSSPG and PPPL…KSDK. 2 stretches are compositionally biased toward low complexity: residues 706–726 and 750–781; these read GSTPNNGTPSSSGTPSLSSPG and NNNNNNNNNNNNNNNNNNNTNTNTNSNSTTTN.

The protein belongs to the metallo-dependent hydrolases superfamily. Adenosine and AMP deaminases family. Homodimer. Zn(2+) serves as cofactor.

It is found in the cytoplasm. The enzyme catalyses AMP + H2O + H(+) = IMP + NH4(+). It functions in the pathway purine metabolism; IMP biosynthesis via salvage pathway; IMP from AMP: step 1/1. Its activity is regulated as follows. Activated by ATP, inhibited by GTP, EDTA and inorganic phosphate. In terms of biological role, catalyzes the conversion of adenosine monophosphate (AMP) to inosine monophosphate (IMP) and ammonia (NH4(+)). Participates in the regulation of the adenylated nucleotide pool and the interconversion to guanylated nucleotides during early morphodifferentiation. The chain is AMP deaminase (amdA) from Dictyostelium discoideum (Social amoeba).